The sequence spans 419 residues: Ribosome biogenesis protein WDR12 homolog (419 aa).

The tract at residues 10-91 is ubiquitin-like (UBL) domain; that stretch reads VQVHLKTKQE…EDAIEIEYVE (82 aa). WD repeat units lie at residues 103–141, 142–184, 191–230, 249–287, 289–328, 334–374, and 378–416; these read LHDD…LTIP, GHTA…NTVE, GHER…AGEG, GHRE…IKAE, STNK…GSVV, GHNA…APLY, and GHGE…VENM.

Belongs to the WD repeat WDR12/YTM1 family.

It localises to the nucleus. It is found in the nucleolus. The protein localises to the nucleoplasm. Required for maturation of ribosomal RNAs and formation of the large ribosomal subunit. This chain is Ribosome biogenesis protein WDR12 homolog, found in Drosophila persimilis (Fruit fly).